The sequence spans 175 residues: ATP synthase subunit delta (175 aa).

The protein belongs to the ATPase delta chain family. As to quaternary structure, F-type ATPases have 2 components, F(1) - the catalytic core - and F(0) - the membrane proton channel. F(1) has five subunits: alpha(3), beta(3), gamma(1), delta(1), epsilon(1). F(0) has three main subunits: a(1), b(2) and c(10-14). The alpha and beta chains form an alternating ring which encloses part of the gamma chain. F(1) is attached to F(0) by a central stalk formed by the gamma and epsilon chains, while a peripheral stalk is formed by the delta and b chains.

Its subcellular location is the cell inner membrane. Its function is as follows. F(1)F(0) ATP synthase produces ATP from ADP in the presence of a proton or sodium gradient. F-type ATPases consist of two structural domains, F(1) containing the extramembraneous catalytic core and F(0) containing the membrane proton channel, linked together by a central stalk and a peripheral stalk. During catalysis, ATP synthesis in the catalytic domain of F(1) is coupled via a rotary mechanism of the central stalk subunits to proton translocation. In terms of biological role, this protein is part of the stalk that links CF(0) to CF(1). It either transmits conformational changes from CF(0) to CF(1) or is implicated in proton conduction. In Stenotrophomonas maltophilia (strain R551-3), this protein is ATP synthase subunit delta.